The sequence spans 319 residues: Olfactory receptor 13F1 (319 aa).

Topologically, residues 1–25 (MFPANWTSVKVFFFLGFFHYPKVQV) are extracellular. N-linked (GlcNAc...) asparagine glycosylation is present at Asn5. Residues 26-46 (IIFAVCLLMYLITLLGNIFLI) form a helical membrane-spanning segment. Over 47-54 (SITILDSH) the chain is Cytoplasmic. Residues 55-75 (LHTPMYLFLSNLSFLDIWYSS) traverse the membrane as a helical segment. At 76-99 (SALSPMLANFVSGRNTISFSGCAT) the chain is on the extracellular side. Cysteines 97 and 189 form a disulfide. A helical membrane pass occupies residues 100-120 (QMYLSLAMGSTECVLLPMMAY). The Cytoplasmic segment spans residues 121–139 (DRYVAICNPLRYPVIMNRR). Residues 140–160 (TCVQIAAGSWMTGCLTAMVEM) form a helical membrane-spanning segment. The Extracellular portion of the chain corresponds to 161–197 (MSVLPLSLCGNSIINHFTCEILAILKLVCVDTSLVQL). The helical transmembrane segment at 198–217 (IMLVISVLLLPMPMLLICIS) threads the bilayer. Residues 218 to 237 (YAFILASILRISSVEGRSKA) lie on the Cytoplasmic side of the membrane. The helical transmembrane segment at 238–258 (FSTCTAHLMVVVLFYGTALSM) threads the bilayer. The Extracellular segment spans residues 259-271 (HLKPSAVDSQEID). A helical transmembrane segment spans residues 272–292 (KFMALVYAGQTPMLNPIIYSL). The Cytoplasmic segment spans residues 293–319 (RNKEVKVALKKLLIRNHFNTAFISILK).

Belongs to the G-protein coupled receptor 1 family.

It localises to the cell membrane. Functionally, odorant receptor. The chain is Olfactory receptor 13F1 (OR13F1) from Homo sapiens (Human).